The sequence spans 630 residues: MMAALQTHKEYEKGTKKTFAPPTQKLHSEKPQPSSWKEDAPGTSSPEAETKPSLLKASLKKEQKPTTEHGPNRGQERKLKAQDQPAKKKGKERTLTSAEFEEIFQIVLQKSLQECLETSSCVQHIRPTKLDEEPGIVPPATDKKDADPEKVITPDTPKIASSLEEEVNSEMGTSKLGQPVTEPSKKKFNRLSLSKQKKKAEDEKMEKIQDGRECSLKEKQKIVIQDQSQIRGPQKEEESGFGHCVIWVQCSSPKCEKWRQLRGNIDPSVLPDDWSCDQNPDPNYNRCDIPEESWAGCESDVAYASYVPGSIIWAKQYGYPWWPGMIEADPDLGEYFLFASHLDSLPSKYHVTFFGETVSRAWIPVRMLKNFQELSLELVKKCKNKNSNQKLEAAIAMAHRAEQTSIQERVNLFGFWSRYNGADISEEGEDLTLCESNNPESCLEKEEKDLEEEKEEEEEKKDPTLPRPKPAKMQTKKPKSRGPAGGPDGTPKKKTAKKSLVSESTVPPVPTLGGKEEQGNSDLDHPVPKKKFKAPENKTSATNLSEEKEIKIVSKCPTPSAQHGACPLGKEGLVPHMPPTQEAASFPPDDDCSSDLDLEQLMEDIGEPEERGEMQQRGSSEEFLAALFEE.

Disordered regions lie at residues Met1 to Glu99 and Leu130 to Ser184. 3 stretches are compositionally biased toward basic and acidic residues: residues Leu26–Ala40, Leu59–Ala81, and Thr141–Ile152. The CW-type zinc-finger motif lies at Phe241 to Ala295. Positions 250, 255, 276, and 287 each coordinate Zn(2+). The PWWP domain maps to Pro308–Leu374. The segment at Asp430–Asp595 is disordered. Positions Glu435–Leu465 form a coiled coil. The segment covering Asp449–Glu459 has biased composition (acidic residues). Residues Gly514–Val527 show a composition bias toward basic and acidic residues. The residue at position 619 (Ser619) is a Phosphoserine.

Testis (at protein level). Expressed in thymus, brain, lung, ovary, oviduct and uterus.

It localises to the nucleus. It is found in the chromosome. In terms of biological role, dual histone methylation reader specific for PRDM9-catalyzed histone marks (H3K4me3 and H3K36me3) that facilitates the repair of PRDM9-induced meiotic double-strand breaks (DSBs). Essential for male fertility and spermatogenesis. Required for meiosis prophase I progression in male but not in female germ cells. The chain is Zinc finger CW-type PWWP domain protein 1 (Zcwpw1) from Mus musculus (Mouse).